The following is a 234-amino-acid chain: Phosphoribosylformylglycinamidine synthase subunit PurQ (234 aa).

The region spanning Arg4–Ala234 is the Glutamine amidotransferase type-1 domain. The Nucleophile role is filled by Cys87. Residues His204 and Glu206 contribute to the active site.

As to quaternary structure, part of the FGAM synthase complex composed of 1 PurL, 1 PurQ and 2 PurS subunits.

It localises to the cytoplasm. The enzyme catalyses N(2)-formyl-N(1)-(5-phospho-beta-D-ribosyl)glycinamide + L-glutamine + ATP + H2O = 2-formamido-N(1)-(5-O-phospho-beta-D-ribosyl)acetamidine + L-glutamate + ADP + phosphate + H(+). It carries out the reaction L-glutamine + H2O = L-glutamate + NH4(+). The protein operates within purine metabolism; IMP biosynthesis via de novo pathway; 5-amino-1-(5-phospho-D-ribosyl)imidazole from N(2)-formyl-N(1)-(5-phospho-D-ribosyl)glycinamide: step 1/2. Functionally, part of the phosphoribosylformylglycinamidine synthase complex involved in the purines biosynthetic pathway. Catalyzes the ATP-dependent conversion of formylglycinamide ribonucleotide (FGAR) and glutamine to yield formylglycinamidine ribonucleotide (FGAM) and glutamate. The FGAM synthase complex is composed of three subunits. PurQ produces an ammonia molecule by converting glutamine to glutamate. PurL transfers the ammonia molecule to FGAR to form FGAM in an ATP-dependent manner. PurS interacts with PurQ and PurL and is thought to assist in the transfer of the ammonia molecule from PurQ to PurL. The protein is Phosphoribosylformylglycinamidine synthase subunit PurQ of Streptomyces avermitilis (strain ATCC 31267 / DSM 46492 / JCM 5070 / NBRC 14893 / NCIMB 12804 / NRRL 8165 / MA-4680).